A 329-amino-acid chain; its full sequence is Nicotianamine synthase 8 (329 aa).

This sequence belongs to the nicotianamine synthase (NAS)-like family. Homotrimer.

It catalyses the reaction 3 S-adenosyl-L-methionine = nicotianamine + 3 S-methyl-5'-thioadenosine + 3 H(+). Synthesizes nicotianamine, a polyamine that is the first intermediate in the synthesis of the phytosiderophores of the mugineic acid type found in gramineae which serve as a sensor for the physiological iron status within the plant, and/or might be involved in the transport of iron. The sequence is that of Nicotianamine synthase 8 (NAS8) from Hordeum vulgare (Barley).